The chain runs to 651 residues: Probable potassium transport system protein Kup 3 (651 aa).

Helical transmembrane passes span Phe-38–Leu-58, Val-77–Lys-97, Leu-129–Thr-149, Pro-166–Val-186, Phe-197–Ile-217, Ile-242–Ala-262, Trp-276–Leu-296, Leu-314–Ile-334, Ile-366–Phe-386, Tyr-396–Trp-416, Trp-421–Phe-441, and Leu-448–Thr-468.

It belongs to the HAK/KUP transporter (TC 2.A.72) family.

Its subcellular location is the cell inner membrane. It catalyses the reaction K(+)(in) + H(+)(in) = K(+)(out) + H(+)(out). Its function is as follows. Transport of potassium into the cell. Likely operates as a K(+):H(+) symporter. The protein is Probable potassium transport system protein Kup 3 of Rhodopseudomonas palustris (strain ATCC BAA-98 / CGA009).